A 450-amino-acid chain; its full sequence is MYTKDTIVAIATPQGNGGIGIIRISGIDALAIAEKLTKKQLKPRYATFCNVYNDNEIIDHGIVIFFKAPLSYTGEDVVEIQAHGNPFILNLIIKAALNCGARMAKAGEFTERAFLNNKLDLAQAEAVADIINASSEIAAKSAAKSLQGDFSKEINNLLEKLIYLRMYVEASIDFPEEEINFLEDQKIHSSLEEIYKVILAVKNSCKQGVILAEGITLILVGKPNAGKSSLLNALAGKESAIVTSIAGTTRDIVKEHIQINGVPMHIIDTAGLRNSDDIIESEGIKRAIKKIQEADQVLFVTDDYTNSQVKFSDIKEIIPEFYDQIPKDIDITYVHNKIDLLKEVPHNHANHIYISAENNIGIDKLKEHILNKVGYTNQNESIYTARERHVTAINNAFEHIKLAREQLELGNGELLAEELLIVQEYLNSITGEFSSDDLLGEIFSSFCIGK.

Positions 23, 79, and 118 each coordinate (6S)-5-formyl-5,6,7,8-tetrahydrofolate. Residues 214 to 374 (GITLILVGKP…LKEHILNKVG (161 aa)) form the TrmE-type G domain. Asparagine 224 is a binding site for K(+). GTP contacts are provided by residues 224-229 (NAGKSS), 243-249 (TSIAGTT), and 268-271 (DTAG). Serine 228 contacts Mg(2+). Positions 243, 245, and 248 each coordinate K(+). Threonine 249 provides a ligand contact to Mg(2+). Lysine 450 provides a ligand contact to (6S)-5-formyl-5,6,7,8-tetrahydrofolate.

Belongs to the TRAFAC class TrmE-Era-EngA-EngB-Septin-like GTPase superfamily. TrmE GTPase family. In terms of assembly, homodimer. Heterotetramer of two MnmE and two MnmG subunits. The cofactor is K(+).

Its subcellular location is the cytoplasm. Its function is as follows. Exhibits a very high intrinsic GTPase hydrolysis rate. Involved in the addition of a carboxymethylaminomethyl (cmnm) group at the wobble position (U34) of certain tRNAs, forming tRNA-cmnm(5)s(2)U34. The polypeptide is tRNA modification GTPase MnmE (Francisella tularensis subsp. tularensis (strain WY96-3418)).